The following is a 676-amino-acid chain: tRNA 5-methylaminomethyl-2-thiouridine biosynthesis bifunctional protein MnmC (676 aa).

The interval 1 to 241 (MFTVTPAKIY…KRECLCGIKN (241 aa)) is tRNA (mnm(5)s(2)U34)-methyltransferase. Residues 268-676 (IGGGIASLFT…RKLLKGTEIK (409 aa)) are FAD-dependent cmnm(5)s(2)U34 oxidoreductase.

The protein in the N-terminal section; belongs to the methyltransferase superfamily. tRNA (mnm(5)s(2)U34)-methyltransferase family. It in the C-terminal section; belongs to the DAO family. FAD serves as cofactor.

The protein localises to the cytoplasm. It catalyses the reaction 5-aminomethyl-2-thiouridine(34) in tRNA + S-adenosyl-L-methionine = 5-methylaminomethyl-2-thiouridine(34) in tRNA + S-adenosyl-L-homocysteine + H(+). Catalyzes the last two steps in the biosynthesis of 5-methylaminomethyl-2-thiouridine (mnm(5)s(2)U) at the wobble position (U34) in tRNA. Catalyzes the FAD-dependent demodification of cmnm(5)s(2)U34 to nm(5)s(2)U34, followed by the transfer of a methyl group from S-adenosyl-L-methionine to nm(5)s(2)U34, to form mnm(5)s(2)U34. The sequence is that of tRNA 5-methylaminomethyl-2-thiouridine biosynthesis bifunctional protein MnmC from Histophilus somni (strain 129Pt) (Haemophilus somnus).